Here is a 150-residue protein sequence, read N- to C-terminus: UPF0098 protein CT_736 (150 aa).

It belongs to the UPF0098 family.

In Chlamydia trachomatis serovar D (strain ATCC VR-885 / DSM 19411 / UW-3/Cx), this protein is UPF0098 protein CT_736.